A 198-amino-acid polypeptide reads, in one-letter code: Holliday junction branch migration complex subunit RuvA (198 aa).

Residues 1-63 (MYDYIKGQLT…EDAHLLFGFH (63 aa)) form a domain I region. The interval 64-142 (TEDEKDVFLK…EAPQETGHTK (79 aa)) is domain II. A flexible linker region spans residues 143–147 (ARSNK). Residues 148–198 (AGNTQLDEAIEALLALGYKATELKKIRAFFEGTSETAEQYIKSALKLLMKG) form a domain III region.

The protein belongs to the RuvA family. As to quaternary structure, homotetramer. Forms an RuvA(8)-RuvB(12)-Holliday junction (HJ) complex. HJ DNA is sandwiched between 2 RuvA tetramers; dsDNA enters through RuvA and exits via RuvB. An RuvB hexamer assembles on each DNA strand where it exits the tetramer. Each RuvB hexamer is contacted by two RuvA subunits (via domain III) on 2 adjacent RuvB subunits; this complex drives branch migration. In the full resolvosome a probable DNA-RuvA(4)-RuvB(12)-RuvC(2) complex forms which resolves the HJ.

The protein localises to the cytoplasm. In terms of biological role, the RuvA-RuvB-RuvC complex processes Holliday junction (HJ) DNA during genetic recombination and DNA repair, while the RuvA-RuvB complex plays an important role in the rescue of blocked DNA replication forks via replication fork reversal (RFR). RuvA specifically binds to HJ cruciform DNA, conferring on it an open structure. The RuvB hexamer acts as an ATP-dependent pump, pulling dsDNA into and through the RuvAB complex. HJ branch migration allows RuvC to scan DNA until it finds its consensus sequence, where it cleaves and resolves the cruciform DNA. This is Holliday junction branch migration complex subunit RuvA from Streptococcus pyogenes serotype M6 (strain ATCC BAA-946 / MGAS10394).